The primary structure comprises 242 residues: Ribosomal RNA small subunit methyltransferase G (242 aa).

S-adenosyl-L-methionine is bound by residues glycine 78, leucine 83, 130–131, and arginine 151; that span reads AE.

Belongs to the methyltransferase superfamily. RNA methyltransferase RsmG family.

It localises to the cytoplasm. Its function is as follows. Specifically methylates the N7 position of guanine in position 518 of 16S rRNA. The polypeptide is Ribosomal RNA small subunit methyltransferase G (Salinispora arenicola (strain CNS-205)).